Reading from the N-terminus, the 149-residue chain is Large-conductance mechanosensitive channel (149 aa).

2 helical membrane passes run 14 to 34 (VVDMAVGIIVGGAFGKLVNTL) and 85 to 105 (GLFINAMISFIIMAFAVYLLV).

It belongs to the MscL family. As to quaternary structure, homopentamer.

The protein resides in the cell inner membrane. Its function is as follows. Channel that opens in response to stretch forces in the membrane lipid bilayer. May participate in the regulation of osmotic pressure changes within the cell. This Chlorobium phaeovibrioides (strain DSM 265 / 1930) (Prosthecochloris vibrioformis (strain DSM 265)) protein is Large-conductance mechanosensitive channel.